The chain runs to 431 residues: MKLAESMYAGPAHIGTLRVASSFRNVHAIMHAPLGDDYFNVMRSMLERERDFTPVTASIVDRHVLARGSQEKVVENIQRKDKEESPDLILLTPTCTSSILQEDLQNFVNRASETSTSDVLLADVNHYRVNELQAADRTLEQIVRFYIEKTRAKDPGSPDPGGAGRRQASSSTESGTEENLKGACGGEKTKKPSANILGMFTLGFHNQHDCRELKRLLAELDIEVNEVIPEGGLVSNLKNLPKAWFNIVPYREVGLMTAVYLEKEFGMPYTSTTPMGIIQTSAFIREMALMCHEVYNNSSTKCSQTDFESCLISNTKKVPKTYINKQTHFVSQAGWFARSIDCQNLTGQKTVVFGDATHAASMTKILVREMGIHVVCAGTYCKHDADWFREQVSGFCDQVLITDDHSQIGDIISQIEPAAIFGTQMERHIGK.

Residue aspartate 36 participates in [4Fe-4S] cluster binding. A disordered region spans residues 150–187 (TRAKDPGSPDPGGAGRRQASSSTESGTEENLKGACGGE). Aspartate 341 serves as the catalytic Proton donor.

Belongs to the ChlB/BchB/BchZ family. Protochlorophyllide reductase is composed of three subunits; ChlL, ChlN and ChlB. Forms a heterotetramer of two ChlB and two ChlN subunits. [4Fe-4S] cluster serves as cofactor.

The protein resides in the plastid. The protein localises to the chloroplast. The enzyme catalyses chlorophyllide a + oxidized 2[4Fe-4S]-[ferredoxin] + 2 ADP + 2 phosphate = protochlorophyllide a + reduced 2[4Fe-4S]-[ferredoxin] + 2 ATP + 2 H2O. It functions in the pathway porphyrin-containing compound metabolism; chlorophyll biosynthesis (light-independent). Component of the dark-operative protochlorophyllide reductase (DPOR) that uses Mg-ATP and reduced ferredoxin to reduce ring D of protochlorophyllide (Pchlide) to form chlorophyllide a (Chlide). This reaction is light-independent. The NB-protein (ChlN-ChlB) is the catalytic component of the complex. The chain is Light-independent protochlorophyllide reductase subunit B (chlB) from Chlamydomonas applanata (Chlamydomonas humicola).